Here is an 862-residue protein sequence, read N- to C-terminus: Short transient receptor potential channel 7 (862 aa).

The segment at 1–21 is disordered; the sequence is MLGSNTFKNMQRRHTTLREKG. The Cytoplasmic portion of the chain corresponds to 1–351; it reads MLGSNTFKNM…GLRQQSIAVK (351 aa). Positions 10-21 are enriched in basic residues; sequence MQRRHTTLREKG. Phosphothreonine; by PKG/PRKG1 is present on threonine 15. ANK repeat units lie at residues 42 to 71, 77 to 106, 108 to 134, and 163 to 192; these read PEEE…TLNF, MGQN…LARV, DALL…FAQG, and HDIT…RIER. The chain crosses the membrane as a helical span at residues 352–372; that stretch reads FLAVFGVSIGLPFLAIAYWIA. The Extracellular portion of the chain corresponds to 373–383; it reads PCSKLGQTLRS. The chain crosses the membrane as a helical span at residues 384–404; sequence PFMKFVAHAVSFTIFLGLLVV. At 405-465 the chain is on the cytoplasmic side; the sequence is NASDRFEGVK…KEIWEEGPRE (61 aa). A helical transmembrane segment spans residues 466-486; sequence YVLHLWNLLDFGMLSIFVASF. Residues 487 to 537 are Extracellular-facing; it reads TARFMAFLKASEAQLYVDQYVQDVTLHNVSLPPEVAYFTYARDKWWPSDPQ. Asparagine 514 is a glycosylation site (N-linked (GlcNAc...) asparagine). The helical transmembrane segment at 538 to 558 threads the bilayer; that stretch reads IISEGLYAIAVVLSFSRIAYI. Over 559–581 the chain is Cytoplasmic; it reads LPANESFGPLQISLGRTVKDIFK. Residues 582-602 form a helical membrane-spanning segment; that stretch reads FMVIFIMVFVAFMIGMFNLYS. The Extracellular portion of the chain corresponds to 603–651; it reads YYRGAKYNPAFTTVEESFKTLFWSIFGLSEVISVVLKYDHKFIENIGYV. Residues 652–672 traverse the membrane as a helical segment; that stretch reads LYGVYNVTMVVVLLNMLIAMI. Over 673–862 the chain is Cytoplasmic; that stretch reads NNSYQEIEED…HLRVNQGKDI (190 aa).

Belongs to the transient receptor (TC 1.A.4) family. STrpC subfamily. TRPC7 sub-subfamily. Interacts with MX1 and RNF24. Interacts (via ANK-repeat domains) with PRKG1. Post-translationally, phosphorylation by PRKG1 at Thr-15 negatively regulates TRPC7 activity.

It is found in the cell membrane. Its subcellular location is the nucleus envelope. It carries out the reaction Ca(2+)(in) = Ca(2+)(out). Its function is as follows. Forms a receptor-activated non-selective calcium permeant cation channel. Probably is operated by a phosphatidylinositol second messenger system activated by receptor tyrosine kinases or G-protein coupled receptors. Activated by diacylglycerol (DAG). May also be activated by intracellular calcium store depletion. The chain is Short transient receptor potential channel 7 (Trpc7) from Mus musculus (Mouse).